Reading from the N-terminus, the 179-residue chain is ATP synthase subunit delta (179 aa).

This sequence belongs to the ATPase delta chain family. F-type ATPases have 2 components, F(1) - the catalytic core - and F(0) - the membrane proton channel. F(1) has five subunits: alpha(3), beta(3), gamma(1), delta(1), epsilon(1). F(0) has three main subunits: a(1), b(2) and c(10-14). The alpha and beta chains form an alternating ring which encloses part of the gamma chain. F(1) is attached to F(0) by a central stalk formed by the gamma and epsilon chains, while a peripheral stalk is formed by the delta and b chains.

Its subcellular location is the cell inner membrane. Its function is as follows. F(1)F(0) ATP synthase produces ATP from ADP in the presence of a proton or sodium gradient. F-type ATPases consist of two structural domains, F(1) containing the extramembraneous catalytic core and F(0) containing the membrane proton channel, linked together by a central stalk and a peripheral stalk. During catalysis, ATP synthesis in the catalytic domain of F(1) is coupled via a rotary mechanism of the central stalk subunits to proton translocation. Functionally, this protein is part of the stalk that links CF(0) to CF(1). It either transmits conformational changes from CF(0) to CF(1) or is implicated in proton conduction. In Cupriavidus pinatubonensis (strain JMP 134 / LMG 1197) (Cupriavidus necator (strain JMP 134)), this protein is ATP synthase subunit delta.